The sequence spans 82 residues: Myosin light chain alkali (82 aa).

Residues 7–42 enclose the EF-hand domain; that stretch reads GCYEDFIECLKLYDKEENGTMMLAELQHALLALGES.

As to quaternary structure, myosin is a hexamer of 2 heavy chains and 4 light chains.

The sequence is that of Myosin light chain alkali (Mlc1) from Drosophila mauritiana (Fruit fly).